Here is a 133-residue protein sequence, read N- to C-terminus: Small ribosomal subunit protein uS8 (133 aa).

This sequence belongs to the universal ribosomal protein uS8 family. In terms of assembly, part of the 30S ribosomal subunit. Contacts proteins S5 and S12.

In terms of biological role, one of the primary rRNA binding proteins, it binds directly to 16S rRNA central domain where it helps coordinate assembly of the platform of the 30S subunit. The protein is Small ribosomal subunit protein uS8 of Parasynechococcus marenigrum (strain WH8102).